The following is a 123-amino-acid chain: Large ribosomal subunit protein bL20 (123 aa).

The protein belongs to the bacterial ribosomal protein bL20 family.

Functionally, binds directly to 23S ribosomal RNA and is necessary for the in vitro assembly process of the 50S ribosomal subunit. It is not involved in the protein synthesizing functions of that subunit. The protein is Large ribosomal subunit protein bL20 of Chlamydia trachomatis serovar L2b (strain UCH-1/proctitis).